The sequence spans 233 residues: Small ribosomal subunit protein uS2 (233 aa).

The protein belongs to the universal ribosomal protein uS2 family.

This chain is Small ribosomal subunit protein uS2, found in Bacillus cytotoxicus (strain DSM 22905 / CIP 110041 / 391-98 / NVH 391-98).